The following is a 135-amino-acid chain: Translation initiation factor 2 subunit beta (135 aa).

The protein belongs to the eIF-2-beta/eIF-5 family. In terms of assembly, heterotrimer composed of an alpha, a beta and a gamma chain.

Its function is as follows. eIF-2 functions in the early steps of protein synthesis by forming a ternary complex with GTP and initiator tRNA. This chain is Translation initiation factor 2 subunit beta, found in Methanobrevibacter smithii (strain ATCC 35061 / DSM 861 / OCM 144 / PS).